The chain runs to 539 residues: Inosine-5'-monophosphate dehydrogenase (539 aa).

CBS domains lie at 140–196 (IIVN…DMPI) and 200–257 (MTRE…PRAC). Residues aspartate 292 and 343 to 345 (GIG) contribute to the NAD(+) site. Residues glycine 345 and glycine 347 each contribute to the K(+) site. Serine 348 is a binding site for IMP. Cysteine 350 is a binding site for K(+). The Thioimidate intermediate role is filled by cysteine 350. IMP is bound by residues 383–385 (DGG), 406–407 (GS), and 430–434 (YRGMG). Catalysis depends on arginine 446, which acts as the Proton acceptor. An IMP-binding site is contributed by glutamate 460. The K(+) site is built by glutamate 514 and histidine 516. The disordered stretch occupies residues 517 to 539 (PHDIAITQEAPNYSPDVHSGDAG).

It belongs to the IMPDH/GMPR family. In terms of assembly, homotetramer. K(+) serves as cofactor.

The catalysed reaction is IMP + NAD(+) + H2O = XMP + NADH + H(+). It functions in the pathway purine metabolism; XMP biosynthesis via de novo pathway; XMP from IMP: step 1/1. Mycophenolic acid (MPA) is a non-competitive inhibitor that prevents formation of the closed enzyme conformation by binding to the same site as the amobile flap. In contrast, mizoribine monophosphate (MZP) is a competitive inhibitor that induces the closed conformation. MPA is a potent inhibitor of mammalian IMPDHs but a poor inhibitor of the bacterial enzymes. MZP is a more potent inhibitor of bacterial IMPDH. In terms of biological role, catalyzes the conversion of inosine 5'-phosphate (IMP) to xanthosine 5'-phosphate (XMP), the first committed and rate-limiting step in the de novo synthesis of guanine nucleotides, and therefore plays an important role in the regulation of cell growth. This chain is Inosine-5'-monophosphate dehydrogenase, found in Rhodopirellula baltica (strain DSM 10527 / NCIMB 13988 / SH1).